The following is a 1721-amino-acid chain: MAQFPTPFGGSLDIWAITVEERAKHDQQFHSLKPISGFITGDQARNFFFQSGLPQPVLAQIWALADMNNDGRMDQVEFSIAMKLIKLKLQGYQLPSALPPVMKQQPVAISSAPAFGMGGIASMPPLTAVAPVPMGSIPVVGMSPTLVSSVPTAAVPPLANGAPPVIQPLPAFAHPAATLPKSSSFSRSGPGSQLNTKLQKAQSFDVASVPPVAEWAVPQSSRLKYRQLFNSHDKTMSGHLTGPQARTILMQSSLPQAQLASIWNLSDIDQDGKLTAEEFILAMHLIDVAMSGQPLPPVLPPEYIPPSFRRVRSGSGISVISSTSVDQRLPEEPVLEDEQQQLEKKLPVTFEDKKRENFERGNLELEKRRQALLEQQRKEQERLAQLERAEQERKERERQEQERKRQLELEKQLEKQRELERQREEERRKEIERREAAKRELERQRQLEWERNRRQELLNQRNKEQEDIVVLKAKKKTLEFELEALNDKKHQLEGKLQDIRCRLTTQRQEIESTNKSRELRIAEITHLQQQLQESQQMLGRLIPEKQILNDQLKQVQQNSLHRDSLVTLKRALEAKELARQHLRDQLDEVEKETRSKLQEIDIFNNQLKELREIHNKQQLQKQKSMEAERLKQKEQERKIIELEKQKEEAQRRAQERDKQWLEHVQQEDEHQRPRKLHEEEKLKREESVKKKDGEEKGKQEAQDKLGRLFHQHQEPAKPAVQAPWSTAEKGPLTISAQENVKVVYYRALYPFESRSHDEITIQPGDIVMVKGEWVDESQTGEPGWLGGELKGKTGWFPANYAEKIPENEVPAPVKPVTDSTSAPAPKLALRETPAPLAVTSSEPSTTPNNWADFSSTWPTSTNEKPETDNWDAWAAQPSLTVPSAGQLRQRSAFTPATATGSSPSPVLGQGEKVEGLQAQALYPWRAKKDNHLNFNKNDVITVLEQQDMWWFGEVQGQKGWFPKSYVKLISGPIRKSTSMDSGSSESPASLKRVASPAAKPVVSGEEFIAMYTYESSEQGDLTFQQGDVILVTKKDGDWWTGTVGDKAGVFPSNYVRLKDSEGSGTAGKTGSLGKKPEIAQVIASYTATGPEQLTLAPGQLILIRKKNPGGWWEGELQARGKKRQIGWFPANYVKLLSPGTSKITPTEPPKSTALAAVCQVIGMYDYTAQNDDELAFNKGQIINVLNKEDPDWWKGEVNGQVGLFPSNYVKLTTDMDPSQQWCSDLHLLDMLTPTERKRQGYIHELIVTEENYVNDLQLVTEIFQKPLMESELLTEKEVAMIFVNWKELIMCNIKLLKALRVRKKMSGEKMPVKMIGDILSAQLPHMQPYIRFCSRQLNGAALIQQKTDEAPDFKEFVKRLAMDPRCKGMPLSSFILKPMQRVTRYPLIIKNILENTPENHPDHSHLKHALEKAEELCSQVNEGVREKENSDRLEWIQAHVQCEGLSEQLVFNSVTNCLGPRKFLHSGKLYKAKSNKELYGFLFNDFLLLTQITKPLGSSGTDKVFSPKSNLQYKMYKTPIFLNEVLVKLPTDPSGDEPIFHISHIDRVYTLRAESINERTAWVQKIKAASELYIETEKKKREKAYLVRSQRATGIGRLMVNVVEGIELKPCRSHGKSNPYCEVTMGSQCHITKTIQDTLNPKWNSNCQFFIRDLEQEVLCITVFERDQFSPDDFLGRTEIRVADIKKDQGSKGPVTKCLLLHEVPTGEIVVRLDLQLFDEP.

The region spanning Glu-21–Ile-109 is the EH 1 domain. The 36-residue stretch at Leu-53–Lys-88 folds into the EF-hand 1 domain. Residues Asp-66, Asn-68, Asp-70, Arg-72, and Glu-77 each coordinate Ca(2+). Ser-203 bears the Phosphoserine mark. The EH 2 domain maps to Ser-221–Arg-310. Residues Leu-254 to Ala-289 form the EF-hand 2 domain. Ca(2+) contacts are provided by Asp-267, Asp-269, Asp-271, Lys-273, and Glu-278. The residue at position 318 (Ser-318) is a Phosphoserine. Disordered regions lie at residues Ser-322–Val-348 and Gln-650–Ala-701. The KLERQ stretch occupies residues Asp-326–Gln-702. The stretch at Arg-355–Gln-659 forms a coiled coil. Ser-687 is modified (phosphoserine). One can recognise an SH3 1 domain in the interval Val-740–Glu-806. The interval Leu-836 to Asp-868 is disordered. Residues Val-838–Asn-862 show a composition bias toward polar residues. A Phosphothreonine modification is found at Thr-897. Phosphoserine occurs at positions 901, 902, and 904. An SH3 2 domain is found at Val-913 to Gly-971. Phosphoserine occurs at positions 978, 986, and 995. SH3 domains lie at Val-1002–Ser-1060 and Lys-1074–Pro-1138. Positions Lys-1074–Pro-1138 are required for interaction with FCHSD2. The Bipartite nuclear localization signal; in isoform 2 signature appears at Arg-1104–Trp-1127. A Phosphoserine modification is found at Ser-1137. Thr-1144 bears the Phosphothreonine mark. The 60-residue stretch at Ala-1155–Asp-1214 folds into the SH3 5 domain. The 187-residue stretch at Lys-1237–Gly-1423 folds into the DH domain. Residues Lys-1462–Glu-1571 form the PH domain. The C2 domain maps to Lys-1579 to Val-1695. Residue Ser-1645 is modified to Phosphoserine. Positions 1667, 1670, and 1673 each coordinate Ca(2+).

In terms of assembly, interacts (via DH domain) with CDC42. Interacts (via SH3 domain 1) with WASL. Interacts with dynamin, SNAP25 and SNAP23. Interacts with clathrin-associated proteins and other components of the endocytic machinery, such as SPIN90, EPS15, EPN1, EPN2, STON2, FCHO1, FCHO2 and DAB2. Interacts (via SH3 domains) with REPS1 and SGIP1. Interacts with ARHGAP31. Interacts with ADAM15. Interacts with PRRT2. Interacts (via SH3 domain 4) with FCHSD2 (via SH3 domain 2). Interacts (via SH3 domain 1) with DENND2B. Interacts (via SH3 domains) with CBL. Isoform 2: Interacts with CBL and DNM1. Isoform 2: Interacts with LMNA. Isoform 2: Interacts with importin subunit KPNA1; this is likely to mediate its import into the nucleus. Interacts with DNM2. (Microbial infection) Interacts with vaccinia virus protein A36. The cofactor is Ca(2+). Isoform 1 is expressed almost exclusively in the brain. Isoform 2 is detected in brain, spleen, lung, liver, heart, skeletal muscle and kidney. Isoform 5 is primarily expressed in brain, spleen, lung and kidney (at protein level). Isoform 1 and isoform 2 are detected in brain. Isoform 2 is ubiquitous in adult and fetal tissues with high expression in skeletal muscle, heart, spleen, ovary, testis and all fetal tissues tested and low expression in thymus, blood, lung, liver and pancreas. Isoform 1 is expressed almost exclusively in the brain, in all brain regions. Not expressed in the spinal cord.

The protein localises to the endomembrane system. Its subcellular location is the synapse. It localises to the synaptosome. It is found in the cell projection. The protein resides in the lamellipodium. The protein localises to the cell membrane. Its subcellular location is the membrane. It localises to the clathrin-coated pit. It is found in the recycling endosome. The protein resides in the endosome. The protein localises to the cytoplasmic vesicle. Its subcellular location is the cytoplasm. It localises to the nucleus envelope. In terms of biological role, adapter protein that provides a link between the endocytic membrane traffic and the actin assembly machinery. Acts as a guanine nucleotide exchange factor (GEF) for CDC42, and thereby stimulates actin nucleation mediated by WASL and the ARP2/3 complex. Plays a role in the assembly and maturation of clathrin-coated vesicles. Recruits FCHSD2 to clathrin-coated pits. Involved in endocytosis of activated EGFR, and probably also other growth factor receptors. Involved in endocytosis of integrin beta-1 (ITGB1) and transferrin receptor (TFR); internalization of ITGB1 as DAB2-dependent cargo but not TFR may involve association with DAB2. Promotes ubiquitination and subsequent degradation of EGFR, and thereby contributes to the down-regulation of EGFR-dependent signaling pathways. In chromaffin cells, required for normal exocytosis of catecholamines. Required for rapid replenishment of release-ready synaptic vesicles at presynaptic active zones. Inhibits ARHGAP31 activity toward RAC1. Plays a role in synaptic vesicle endocytosis in brain neurons. In Homo sapiens (Human), this protein is Intersectin-1.